The primary structure comprises 300 residues: Aspartate carbamoyltransferase catalytic subunit (300 aa).

Residues Arg50 and Thr51 each contribute to the carbamoyl phosphate site. L-aspartate is bound at residue Lys78. 3 residues coordinate carbamoyl phosphate: Arg100, His127, and Gln130. Positions 160 and 210 each coordinate L-aspartate. Residues Ala253 and Pro254 each contribute to the carbamoyl phosphate site.

This sequence belongs to the aspartate/ornithine carbamoyltransferase superfamily. ATCase family. As to quaternary structure, heterododecamer (2C3:3R2) of six catalytic PyrB chains organized as two trimers (C3), and six regulatory PyrI chains organized as three dimers (R2).

The catalysed reaction is carbamoyl phosphate + L-aspartate = N-carbamoyl-L-aspartate + phosphate + H(+). It functions in the pathway pyrimidine metabolism; UMP biosynthesis via de novo pathway; (S)-dihydroorotate from bicarbonate: step 2/3. Its function is as follows. Catalyzes the condensation of carbamoyl phosphate and aspartate to form carbamoyl aspartate and inorganic phosphate, the committed step in the de novo pyrimidine nucleotide biosynthesis pathway. The chain is Aspartate carbamoyltransferase catalytic subunit from Staphylococcus saprophyticus subsp. saprophyticus (strain ATCC 15305 / DSM 20229 / NCIMB 8711 / NCTC 7292 / S-41).